We begin with the raw amino-acid sequence, 392 residues long: DNA replication and repair protein RecF (392 aa).

Residue 33–40 (GANGAGKT) coordinates ATP.

This sequence belongs to the RecF family.

It localises to the cytoplasm. Functionally, the RecF protein is involved in DNA metabolism; it is required for DNA replication and normal SOS inducibility. RecF binds preferentially to single-stranded, linear DNA. It also seems to bind ATP. The chain is DNA replication and repair protein RecF from Caulobacter sp. (strain K31).